A 494-amino-acid chain; its full sequence is Alpha-amylase-related protein (494 aa).

Residues 1–20 form the signal peptide; that stretch reads MIKFALALTLCLAGASLSLA. The residue at position 21 (Gln-21) is a Pyrrolidone carboxylic acid. Cys-48 and Cys-104 are disulfide-bonded. Ca(2+) is bound by residues Asn-118, Gln-169, and Asp-178. A disulfide bridge links Cys-157 with Cys-171. Position 206 (Arg-206) interacts with chloride. Catalysis depends on Asp-208, which acts as the Nucleophile. Residue His-212 participates in Ca(2+) binding. Residue Glu-245 is the Proton donor of the active site. The chloride site is built by Asn-308 and Arg-343. 3 cysteine pairs are disulfide-bonded: Cys-376/Cys-382, Cys-418/Cys-441, and Cys-448/Cys-460.

It belongs to the glycosyl hydrolase 13 family. As to quaternary structure, monomer. Ca(2+) serves as cofactor. It depends on chloride as a cofactor.

Its subcellular location is the secreted. The catalysed reaction is Endohydrolysis of (1-&gt;4)-alpha-D-glucosidic linkages in polysaccharides containing three or more (1-&gt;4)-alpha-linked D-glucose units.. The chain is Alpha-amylase-related protein (Amyrel) from Drosophila jambulina (Fruit fly).